A 644-amino-acid polypeptide reads, in one-letter code: Neurofilament medium polypeptide (644 aa).

The segment at 1 to 33 (VKVELDKKVQSLQDEVAFLRTNHEEEVADLLAQ) is coil 1B. The IF rod domain occupies 1–197 (VKVELDKKVQ…KLLEGEETRF (197 aa)). At serine 11 the chain carries Phosphoserine. The segment at 34 to 50 (IQASHITVERKDYLKTD) is linker 12. A coil 2A region spans residues 51 to 72 (ISSALKEIRSQLECHSDQNMHQ). The linker 2 stretch occupies residues 73–76 (AEEW). The coil 2B stretch occupies residues 77 to 197 (FKCRYAKLTE…KLLEGEETRF (121 aa)). At tyrosine 105 the chain carries Phosphotyrosine. Phosphoserine occurs at positions 131, 203, and 215. The tract at residues 198 to 643 (STFSGSITGP…HAIVKEVTQS (446 aa)) is tail. Threonine 217 is a glycosylation site (O-linked (GlcNAc) threonine). Serine 253 and serine 269 each carry phosphoserine. Residues 270 to 582 (VKEEEKEEEA…GGDRSEEKVV (313 aa)) are disordered. A compositionally biased stretch (acidic residues) spans 274–292 (EKEEEAEGKEEEQEAEEEV). Phosphoserine is present on serine 298. A compositionally biased stretch (acidic residues) spans 308–328 (KEEEGEKEEEGQEEEEEEEDE). Residues 329–350 (GVKSDQAEEGGSEKEGSSKNEG) show a composition bias toward basic and acidic residues. A phosphoserine mark is found at serine 332, serine 340, serine 345, and serine 346. Positions 351–368 (EQEEGETEAEGEVEEAEA) are enriched in acidic residues. At threonine 357 the chain carries Phosphothreonine. A compositionally biased stretch (basic and acidic residues) spans 369–400 (KEEKKTEEKSEEVAAKEEPVTEAKVGKPEKAK). Serine 401, serine 406, serine 442, and serine 465 each carry phosphoserine. A compositionally biased stretch (basic and acidic residues) spans 422–470 (GEQKEEEEKVEEEKKKAAKESPKEEKVEKKEEKPKDVPKKKAESPVKEE). Positions 474–483 (EAATITKPTK) are enriched in low complexity. The segment covering 485-508 (GLEKETKEGEKPLQQEKEKEKAGE) has biased composition (basic and acidic residues). A phosphoserine mark is found at serine 512, serine 550, and serine 566. The segment covering 545-557 (TKEKGSGREEEKG) has biased composition (basic and acidic residues). Residues 568-582 (ADEKKGGDRSEEKVV) are compositionally biased toward basic and acidic residues.

This sequence belongs to the intermediate filament family. In terms of assembly, forms heterodimers with NEFL; which can further hetero-oligomerize (in vitro). Forms heterodimers with INA (in vitro). There are a number of repeats of the tripeptide K-S-P, NFM is phosphorylated on a number of the serines in this motif. It is thought that phosphorylation of NFM results in the formation of interfilament cross bridges that are important in the maintenance of axonal caliber. Post-translationally, phosphorylation seems to play a major role in the functioning of the larger neurofilament polypeptides (NF-M and NF-H), the levels of phosphorylation being altered developmentally and coincidentally with a change in the neurofilament function. In terms of processing, phosphorylated in the head and rod regions by the PKC kinase PKN1, leading to the inhibition of polymerization.

It is found in the cytoplasm. The protein resides in the cytoskeleton. The protein localises to the cell projection. Its subcellular location is the axon. In terms of biological role, neurofilaments usually contain three intermediate filament proteins: NEFL, NEFM, and NEFH which are involved in the maintenance of neuronal caliber. May additionally cooperate with the neuronal intermediate filament proteins PRPH and INA to form neuronal filamentous networks. The sequence is that of Neurofilament medium polypeptide (NEFM) from Oryctolagus cuniculus (Rabbit).